Reading from the N-terminus, the 314-residue chain is Putative lipoprotein LppW (314 aa).

The N-terminal stretch at 1–22 (MRARPLTLLTALAAVTLVVVAG) is a signal peptide. A lipid anchor (N-palmitoyl cysteine) is attached at Cys-23. Residue Cys-23 is the site of S-diacylglycerol cysteine attachment.

It localises to the cell membrane. This Mycobacterium bovis (strain ATCC BAA-935 / AF2122/97) protein is Putative lipoprotein LppW (lppW).